The chain runs to 464 residues: Arginine biosynthesis bifunctional protein ArgJ, mitochondrial (464 aa).

The substrate site is built by Thr-191, Lys-220, Thr-231, Glu-318, Asn-459, and Thr-464. The active-site Nucleophile is the Thr-231.

It belongs to the ArgJ family. Heterodimer of an alpha and a beta chain. Post-translationally, the alpha and beta chains are autoproteolytically processed from a single precursor protein within the mitochondrion.

The protein localises to the mitochondrion matrix. The catalysed reaction is N(2)-acetyl-L-ornithine + L-glutamate = N-acetyl-L-glutamate + L-ornithine. It catalyses the reaction L-glutamate + acetyl-CoA = N-acetyl-L-glutamate + CoA + H(+). The protein operates within amino-acid biosynthesis; L-arginine biosynthesis; L-ornithine and N-acetyl-L-glutamate from L-glutamate and N(2)-acetyl-L-ornithine (cyclic): step 1/1. It functions in the pathway amino-acid biosynthesis; L-arginine biosynthesis; N(2)-acetyl-L-ornithine from L-glutamate: step 1/4. In terms of biological role, catalyzes two activities which are involved in the cyclic version of arginine biosynthesis: the synthesis of acetylglutamate from glutamate and acetyl-CoA, and of ornithine by transacetylation between acetylornithine and glutamate. This chain is Arginine biosynthesis bifunctional protein ArgJ, mitochondrial, found in Pyricularia oryzae (strain 70-15 / ATCC MYA-4617 / FGSC 8958) (Rice blast fungus).